A 346-amino-acid polypeptide reads, in one-letter code: GTPase Obg (346 aa).

An Obg domain is found at 1–159 (MKFLDSAKIY…RTVLLRLKLI (159 aa)). The OBG-type G domain occupies 160–327 (ADAGLVGLPN…ALRAVLAEID (168 aa)). Residues 166-173 (GLPNAGKS), 191-195 (FTTLN), 212-215 (DIPG), 279-282 (SKVD), and 308-310 (SAA) contribute to the GTP site. 2 residues coordinate Mg(2+): S173 and T193.

It belongs to the TRAFAC class OBG-HflX-like GTPase superfamily. OBG GTPase family. In terms of assembly, monomer. The cofactor is Mg(2+).

It localises to the cytoplasm. In terms of biological role, an essential GTPase which binds GTP, GDP and possibly (p)ppGpp with moderate affinity, with high nucleotide exchange rates and a fairly low GTP hydrolysis rate. Plays a role in control of the cell cycle, stress response, ribosome biogenesis and in those bacteria that undergo differentiation, in morphogenesis control. This chain is GTPase Obg, found in Methylocella silvestris (strain DSM 15510 / CIP 108128 / LMG 27833 / NCIMB 13906 / BL2).